Reading from the N-terminus, the 455-residue chain is Bifunctional protein GlmU (455 aa).

Residues 1–229 (MSKKVMSVVI…LNEIEGINDG (229 aa)) are pyrophosphorylase. Residues 11–14 (LAAG), Lys-25, Gln-76, 81–82 (GT), 103–105 (YGD), Gly-140, Glu-154, Asn-169, and Asn-227 each bind UDP-N-acetyl-alpha-D-glucosamine. Residue Asp-105 participates in Mg(2+) binding. Asn-227 serves as a coordination point for Mg(2+). Residues 230-250 (LQLARLERLFQKQQAEKLLLS) form a linker region. Residues 251–455 (GVRILDPARF…IQGWKRPKKT (205 aa)) form an N-acetyltransferase region. UDP-N-acetyl-alpha-D-glucosamine contacts are provided by Arg-333 and Lys-351. The active-site Proton acceptor is the His-363. Residues Tyr-366 and Asn-377 each coordinate UDP-N-acetyl-alpha-D-glucosamine. Residues Ala-380, 386–387 (NY), Ser-405, Ala-423, and Arg-440 contribute to the acetyl-CoA site.

In the N-terminal section; belongs to the N-acetylglucosamine-1-phosphate uridyltransferase family. The protein in the C-terminal section; belongs to the transferase hexapeptide repeat family. Homotrimer. It depends on Mg(2+) as a cofactor.

It localises to the cytoplasm. It catalyses the reaction alpha-D-glucosamine 1-phosphate + acetyl-CoA = N-acetyl-alpha-D-glucosamine 1-phosphate + CoA + H(+). It carries out the reaction N-acetyl-alpha-D-glucosamine 1-phosphate + UTP + H(+) = UDP-N-acetyl-alpha-D-glucosamine + diphosphate. It functions in the pathway nucleotide-sugar biosynthesis; UDP-N-acetyl-alpha-D-glucosamine biosynthesis; N-acetyl-alpha-D-glucosamine 1-phosphate from alpha-D-glucosamine 6-phosphate (route II): step 2/2. Its pathway is nucleotide-sugar biosynthesis; UDP-N-acetyl-alpha-D-glucosamine biosynthesis; UDP-N-acetyl-alpha-D-glucosamine from N-acetyl-alpha-D-glucosamine 1-phosphate: step 1/1. It participates in bacterial outer membrane biogenesis; LPS lipid A biosynthesis. Functionally, catalyzes the last two sequential reactions in the de novo biosynthetic pathway for UDP-N-acetylglucosamine (UDP-GlcNAc). The C-terminal domain catalyzes the transfer of acetyl group from acetyl coenzyme A to glucosamine-1-phosphate (GlcN-1-P) to produce N-acetylglucosamine-1-phosphate (GlcNAc-1-P), which is converted into UDP-GlcNAc by the transfer of uridine 5-monophosphate (from uridine 5-triphosphate), a reaction catalyzed by the N-terminal domain. The polypeptide is Bifunctional protein GlmU (Hamiltonella defensa subsp. Acyrthosiphon pisum (strain 5AT)).